The primary structure comprises 195 residues: Probable GTP-binding protein EngB (195 aa).

The EngB-type G domain maps to 24 to 195; it reads ELPEIALAGR…EAWDAILEKL (172 aa). Residues 32–39, 59–63, 77–80, 144–147, and 176–178 contribute to the GTP site; these read GRSNVGKS, GKTQL, DVPG, TKAD, and FSS. Mg(2+) is bound by residues Ser39 and Thr61.

Belongs to the TRAFAC class TrmE-Era-EngA-EngB-Septin-like GTPase superfamily. EngB GTPase family. The cofactor is Mg(2+).

Its function is as follows. Necessary for normal cell division and for the maintenance of normal septation. This Streptococcus pneumoniae (strain JJA) protein is Probable GTP-binding protein EngB.